Here is a 343-residue protein sequence, read N- to C-terminus: Phosphate acyltransferase (343 aa).

It belongs to the PlsX family. Homodimer. Probably interacts with PlsY.

The protein resides in the cytoplasm. The enzyme catalyses a fatty acyl-[ACP] + phosphate = an acyl phosphate + holo-[ACP]. Its pathway is lipid metabolism; phospholipid metabolism. Catalyzes the reversible formation of acyl-phosphate (acyl-PO(4)) from acyl-[acyl-carrier-protein] (acyl-ACP). This enzyme utilizes acyl-ACP as fatty acyl donor, but not acyl-CoA. The polypeptide is Phosphate acyltransferase (Haemophilus ducreyi (strain 35000HP / ATCC 700724)).